Reading from the N-terminus, the 622-residue chain is 1-deoxy-D-xylulose-5-phosphate synthase (622 aa).

Residues His-80 and 121-123 each bind thiamine diphosphate; that span reads GHS. Position 152 (Asp-152) interacts with Mg(2+). Thiamine diphosphate is bound by residues 153-154, Asn-181, Tyr-288, and Glu-370; that span reads GA. Asn-181 serves as a coordination point for Mg(2+).

This sequence belongs to the transketolase family. DXPS subfamily. In terms of assembly, homodimer. The cofactor is Mg(2+). It depends on thiamine diphosphate as a cofactor.

It carries out the reaction D-glyceraldehyde 3-phosphate + pyruvate + H(+) = 1-deoxy-D-xylulose 5-phosphate + CO2. It participates in metabolic intermediate biosynthesis; 1-deoxy-D-xylulose 5-phosphate biosynthesis; 1-deoxy-D-xylulose 5-phosphate from D-glyceraldehyde 3-phosphate and pyruvate: step 1/1. Its function is as follows. Catalyzes the acyloin condensation reaction between C atoms 2 and 3 of pyruvate and glyceraldehyde 3-phosphate to yield 1-deoxy-D-xylulose-5-phosphate (DXP). The polypeptide is 1-deoxy-D-xylulose-5-phosphate synthase (Shewanella baltica (strain OS185)).